Reading from the N-terminus, the 310-residue chain is AA9 family lytic polysaccharide monooxygenase A (310 aa).

A signal peptide spans 1–21; the sequence is MPSTKVAALSAVLALASTVAG. 2 residues coordinate Cu(2+): H22 and H107. 2 disulfides stabilise this stretch: C77-C199 and C118-C122. N-linked (GlcNAc...) asparagine glycosylation is found at N121 and N159. H185 contributes to the O2 binding site. A Cu(2+)-binding site is contributed by Y196.

This sequence belongs to the polysaccharide monooxygenase AA9 family. Requires Cu(2+) as cofactor.

The protein resides in the secreted. It carries out the reaction [(1-&gt;4)-beta-D-glucosyl]n+m + reduced acceptor + O2 = 4-dehydro-beta-D-glucosyl-[(1-&gt;4)-beta-D-glucosyl]n-1 + [(1-&gt;4)-beta-D-glucosyl]m + acceptor + H2O.. Functionally, lytic polysaccharide monooxygenase (LPMO) that depolymerizes crystalline and amorphous polysaccharides via the oxidation of scissile alpha- or beta-(1-4)-glycosidic bonds, yielding C1, C4 as well as C6 oxidation products. Catalysis by LPMOs requires the reduction of the active-site copper from Cu(II) to Cu(I) by a reducing agent and H(2)O(2) or O(2) as a cosubstrate. Active on cellulose, but not on xylan, starch, or chitin. The chain is AA9 family lytic polysaccharide monooxygenase A from Talaromyces pinophilus (Penicillium pinophilum).